The sequence spans 114 residues: Probable prefoldin subunit 2 (114 aa).

This sequence belongs to the prefoldin subunit beta family. As to quaternary structure, heterohexamer of two PFD-alpha type and four PFD-beta type subunits.

Functionally, binds specifically to cytosolic chaperonin (c-CPN) and transfers target proteins to it. Binds to nascent polypeptide chain and promotes folding in an environment in which there are many competing pathways for nonnative proteins. This Schizosaccharomyces pombe (strain 972 / ATCC 24843) (Fission yeast) protein is Probable prefoldin subunit 2.